Here is a 406-residue protein sequence, read N- to C-terminus: Tryptophan synthase beta chain (406 aa).

Lys99 carries the N6-(pyridoxal phosphate)lysine modification.

Belongs to the TrpB family. Tetramer of two alpha and two beta chains. Pyridoxal 5'-phosphate is required as a cofactor.

It catalyses the reaction (1S,2R)-1-C-(indol-3-yl)glycerol 3-phosphate + L-serine = D-glyceraldehyde 3-phosphate + L-tryptophan + H2O. It functions in the pathway amino-acid biosynthesis; L-tryptophan biosynthesis; L-tryptophan from chorismate: step 5/5. Its function is as follows. The beta subunit is responsible for the synthesis of L-tryptophan from indole and L-serine. The polypeptide is Tryptophan synthase beta chain (Methylobacterium sp. (strain 4-46)).